Here is a 441-residue protein sequence, read N- to C-terminus: Actin-related protein 4 (441 aa).

The tract at residues Val-48–Arg-73 is disordered. A compositionally biased stretch (basic and acidic residues) spans Glu-60–Lys-70.

Belongs to the actin family. ARP4 subfamily. As to quaternary structure, component of the SWR1 chromatin-remodeling complex and of the NuA4 histone acetyltransferase complex. Interacts with the SWI/SNF complex. Interacts with EAF1A and EAF1B. As to expression, mostly expressed in flowers, and, to a lower extent, in roots, seedlings, leaves and siliques (at protein level).

The protein resides in the nucleus. It localises to the cytoplasm. Its function is as follows. Involved in several developmental processes including organization of plant organs, flowering time, anther development, flower senescence and fertility, probably by regulating the chromatin structure. The sequence is that of Actin-related protein 4 from Arabidopsis thaliana (Mouse-ear cress).